Here is a 422-residue protein sequence, read N- to C-terminus: Acetyl-CoA acetyltransferase, mitochondrial (422 aa).

The transit peptide at 1 to 28 (MPVLAALLRRGPLLQRRVQEIRYAERSY) directs the protein to the mitochondrion. Lys61 carries the N6-acetyllysine; alternate modification. At Lys61 the chain carries N6-succinyllysine; alternate. The residue at position 73 (Lys73) is an N6-succinyllysine. Catalysis depends on Cys121, which acts as the Acyl-thioester intermediate. 4 positions are modified to N6-acetyllysine; alternate: Lys169, Lys176, Lys185, and Lys197. An N6-succinyllysine; alternate mark is found at Lys169, Lys176, Lys185, and Lys197. Tyr214 provides a ligand contact to CoA. Tyr214 is a binding site for K(+). Position 218 is an N6-acetyllysine; alternate (Lys218). At Lys218 the chain carries N6-succinyllysine; alternate. Lys238 carries the post-translational modification N6-succinyllysine. Position 240 is an N6-acetyllysine; alternate (Lys240). Lys240 is subject to N6-succinyllysine; alternate. Lys246 and Lys252 each carry N6-acetyllysine. Residues 253–255 (RVD) and Lys258 contribute to the CoA site. Lys258 is modified (N6-acetyllysine; alternate). Lys258 is subject to N6-succinyllysine; alternate. N6-succinyllysine occurs at positions 261 and 263. Residues Ala275, Ala276, and Ala278 each contribute to the K(+) site. Ser279 serves as a coordination point for CoA. N6-acetyllysine is present on Lys333. Val376 serves as a coordination point for K(+). Cys408 serves as the catalytic Proton donor/acceptor.

The protein belongs to the thiolase-like superfamily. Thiolase family. In terms of assembly, homotetramer. Succinylation at Lys-263, adjacent to a coenzyme A binding site. Desuccinylated by SIRT5.

It localises to the mitochondrion. It catalyses the reaction 2 acetyl-CoA = acetoacetyl-CoA + CoA. It carries out the reaction propanoyl-CoA + acetyl-CoA = 2-methyl-3-oxobutanoyl-CoA + CoA. Its pathway is lipid metabolism; fatty acid beta-oxidation. With respect to regulation, activated by potassium ions, but not sodium ions. Functionally, this is one of the enzymes that catalyzes the last step of the mitochondrial beta-oxidation pathway, an aerobic process breaking down fatty acids into acetyl-CoA. Using free coenzyme A/CoA, catalyzes the thiolytic cleavage of medium- to long-chain 3-oxoacyl-CoAs into acetyl-CoA and a fatty acyl-CoA shortened by two carbon atoms. The activity of the enzyme is reversible and it can also catalyze the condensation of two acetyl-CoA molecules into acetoacetyl-CoA. Thereby, it plays a major role in ketone body metabolism. The polypeptide is Acetyl-CoA acetyltransferase, mitochondrial (ACAT1) (Bos taurus (Bovine)).